A 115-amino-acid polypeptide reads, in one-letter code: T cell receptor beta variable 11-3 (115 aa).

A signal peptide spans 1–21; it reads MGTRLLCWVAFCLLVEELIEA. One can recognise an Ig-like domain in the interval 22 to 115; that stretch reads GVVQSPRYKI…SAVYLCASSL (94 aa). Cysteines 42 and 111 form a disulfide.

As to quaternary structure, alpha-beta TR is a heterodimer composed of an alpha and beta chain; disulfide-linked. The alpha-beta TR is associated with the transmembrane signaling CD3 coreceptor proteins to form the TR-CD3 (TcR or TCR). The assembly of alpha-beta TR heterodimers with CD3 occurs in the endoplasmic reticulum where a single alpha-beta TR heterodimer associates with one CD3D-CD3E heterodimer, one CD3G-CD3E heterodimer and one CD247 homodimer forming a stable octameric structure. CD3D-CD3E and CD3G-CD3E heterodimers preferentially associate with TR alpha and TR beta chains, respectively. The association of the CD247 homodimer is the last step of TcR assembly in the endoplasmic reticulum and is required for transport to the cell surface.

Its subcellular location is the cell membrane. Its function is as follows. V region of the variable domain of T cell receptor (TR) beta chain that participates in the antigen recognition. Alpha-beta T cell receptors are antigen specific receptors which are essential to the immune response and are present on the cell surface of T lymphocytes. Recognize peptide-major histocompatibility (MH) (pMH) complexes that are displayed by antigen presenting cells (APC), a prerequisite for efficient T cell adaptive immunity against pathogens. Binding of alpha-beta TR to pMH complex initiates TR-CD3 clustering on the cell surface and intracellular activation of LCK that phosphorylates the ITAM motifs of CD3G, CD3D, CD3E and CD247 enabling the recruitment of ZAP70. In turn ZAP70 phosphorylates LAT, which recruits numerous signaling molecules to form the LAT signalosome. The LAT signalosome propagates signal branching to three major signaling pathways, the calcium, the mitogen-activated protein kinase (MAPK) kinase and the nuclear factor NF-kappa-B (NF-kB) pathways, leading to the mobilization of transcription factors that are critical for gene expression and essential for T cell growth and differentiation. The T cell repertoire is generated in the thymus, by V-(D)-J rearrangement. This repertoire is then shaped by intrathymic selection events to generate a peripheral T cell pool of self-MH restricted, non-autoaggressive T cells. Post-thymic interaction of alpha-beta TR with the pMH complexes shapes TR structural and functional avidity. The polypeptide is T cell receptor beta variable 11-3 (Homo sapiens (Human)).